Here is a 140-residue protein sequence, read N- to C-terminus: Large ribosomal subunit protein uL11 (140 aa).

This sequence belongs to the universal ribosomal protein uL11 family. In terms of assembly, part of the ribosomal stalk of the 50S ribosomal subunit. Interacts with L10 and the large rRNA to form the base of the stalk. L10 forms an elongated spine to which L12 dimers bind in a sequential fashion forming a multimeric L10(L12)X complex. One or more lysine residues are methylated.

Its function is as follows. Forms part of the ribosomal stalk which helps the ribosome interact with GTP-bound translation factors. The protein is Large ribosomal subunit protein uL11 of Syntrophotalea carbinolica (strain DSM 2380 / NBRC 103641 / GraBd1) (Pelobacter carbinolicus).